A 255-amino-acid polypeptide reads, in one-letter code: Isoprenyl transferase (255 aa).

Asp-35 is an active-site residue. Position 35 (Asp-35) interacts with Mg(2+). Substrate-binding positions include 36–39 (GNGR), Trp-40, Arg-48, His-52, and 80–82 (STE). The Proton acceptor role is filled by Asn-83. Substrate contacts are provided by residues Trp-84, Arg-86, Arg-203, and 209 to 211 (RIS). Glu-222 is a Mg(2+) binding site.

It belongs to the UPP synthase family. In terms of assembly, homodimer. Requires Mg(2+) as cofactor.

Functionally, catalyzes the condensation of isopentenyl diphosphate (IPP) with allylic pyrophosphates generating different type of terpenoids. This Clostridium tetani (strain Massachusetts / E88) protein is Isoprenyl transferase.